Reading from the N-terminus, the 313-residue chain is E3 ubiquitin-protein ligase RNF126 (313 aa).

A2 is subject to N-acetylalanine. A Phosphoserine modification is found at S5. A required for interaction with BAG6 region spans residues 5-101 (SPQPGRYFCH…FEIPTFPPGA (97 aa)). C13, C16, C29, and C32 together coordinate Zn(2+). The C4-type zinc-finger motif lies at 13–32 (CHCCSVEIVPRLPDYICPRC). Disordered stretches follow at residues 42 to 64 (EETRSAENGSAPSTASADQSRQQ) and 96 to 128 (TFPPGAQADDSRDPESRREREQHSRHRYGARQP). Residues 47-64 (AENGSAPSTASADQSRQQ) are compositionally biased toward polar residues. Basic and acidic residues predominate over residues 104-117 (DDSRDPESRREREQ). Basic residues predominate over residues 118 to 128 (HSRHRYGARQP). The tract at residues 203–306 (TGPPPADKEK…SSSSSSSPGN (104 aa)) is sufficient for interaction with AICDA. Residues 232-273 (CPVCKDDYGLGEHVRQLPCNHLFHDGCIVPWLEQHDSCPVCR) form an RING-type zinc finger. A disordered region spans residues 280–313 (NTATDPPGLAGVSFSSSSSSSSSSPGNENPASSS). Low complexity predominate over residues 292-313 (SFSSSSSSSSSSPGNENPASSS).

Interacts with CCDC50, EGFR, FLT3 and SCAMP3. Interacts with BAG6 (via ubiquitin-like domain); required for BAG6-dependent ubiquitination of proteins mislocalized to the cytosol. Interacts with CDKN1A. Interacts with AICDA. In terms of processing, ubiquitinated. May undergo autoubiquitination.

It is found in the cytoplasm. The protein resides in the nucleus. It catalyses the reaction S-ubiquitinyl-[E2 ubiquitin-conjugating enzyme]-L-cysteine + [acceptor protein]-L-lysine = [E2 ubiquitin-conjugating enzyme]-L-cysteine + N(6)-ubiquitinyl-[acceptor protein]-L-lysine.. It functions in the pathway protein modification; protein ubiquitination. In terms of biological role, E3 ubiquitin-protein ligase that mediates ubiquitination oF target proteins. Depending on the associated E2 ligase, mediates 'Lys-27'-, 'Lys-29'-, 'Lys-48'- and/or 'Lys-63'-linked polyubiquitination of substrates. Part of a BAG6-dependent quality control process ensuring that proteins of the secretory pathway that are mislocalized to the cytosol are degraded by the proteasome. Probably acts by providing the ubiquitin ligase activity associated with the BAG6 complex and be responsible for ubiquitination of the hydrophobic mislocalized proteins and their targeting to the proteasome. May also play a role in the endosomal recycling of IGF2R, the cation-independent mannose-6-phosphate receptor. May play a role in the endosomal sorting and degradation of several membrane receptors including EGFR, FLT3, MET and CXCR4, by mediating their ubiquitination. By ubiquitinating CDKN1A/p21 and targeting it for degradation, may also promote cell proliferation. May monoubiquitinate AICDA. Acts as a regulator of DNA repair by mediating 'Lys-27'- and 'Lys-29'-linked polyubiquitination of MRE11, thereby promoting the exonuclease activity of MRE11. This is E3 ubiquitin-protein ligase RNF126 from Bos taurus (Bovine).